A 120-amino-acid chain; its full sequence is Hydrogenase maturation factor HypA (120 aa).

Histidine 2 contacts Ni(2+). Zn(2+)-binding residues include cysteine 73, histidine 76, cysteine 89, and cysteine 92.

This sequence belongs to the HypA/HybF family.

Involved in the maturation of [NiFe] hydrogenases. Required for nickel insertion into the metal center of the hydrogenase. The polypeptide is Hydrogenase maturation factor HypA (Deinococcus radiodurans (strain ATCC 13939 / DSM 20539 / JCM 16871 / CCUG 27074 / LMG 4051 / NBRC 15346 / NCIMB 9279 / VKM B-1422 / R1)).